The primary structure comprises 361 residues: DNA replication and repair protein RecF (361 aa).

ATP is bound at residue 30–37 (GPNGSGKT).

The protein belongs to the RecF family.

It localises to the cytoplasm. The RecF protein is involved in DNA metabolism; it is required for DNA replication and normal SOS inducibility. RecF binds preferentially to single-stranded, linear DNA. It also seems to bind ATP. The polypeptide is DNA replication and repair protein RecF (Yersinia pestis).